Reading from the N-terminus, the 441-residue chain is 2-oxoisovalerate dehydrogenase subunit alpha, mitochondrial (441 aa).

A mitochondrion-targeting transit peptide spans 1–17 (MISQSYRILSRISRNNE). A thiamine diphosphate-binding site is contributed by 145–147 (QYR). K(+) contacts are provided by Ser194, Thr199, and Gln200.

Belongs to the BCKDHA family. Heterotetramer of alpha and beta chains. Requires thiamine diphosphate as cofactor.

The protein resides in the mitochondrion matrix. It catalyses the reaction N(6)-[(R)-lipoyl]-L-lysyl-[protein] + 3-methyl-2-oxobutanoate + H(+) = N(6)-[(R)-S(8)-2-methylpropanoyldihydrolipoyl]-L-lysyl-[protein] + CO2. Its function is as follows. The branched-chain alpha-keto dehydrogenase complex catalyzes the overall conversion of alpha-keto acids to acyl-CoA and CO(2). It contains multiple copies of three enzymatic components: branched-chain alpha-keto acid decarboxylase (E1), lipoamide acyltransferase (E2) and lipoamide dehydrogenase (E3). In Dictyostelium discoideum (Social amoeba), this protein is 2-oxoisovalerate dehydrogenase subunit alpha, mitochondrial (bkdA).